Reading from the N-terminus, the 288-residue chain is Bifunctional protein FolD (288 aa).

NADP(+) is bound by residues 166–168 (GRS), Ser191, and Ile232.

The protein belongs to the tetrahydrofolate dehydrogenase/cyclohydrolase family. As to quaternary structure, homodimer.

The catalysed reaction is (6R)-5,10-methylene-5,6,7,8-tetrahydrofolate + NADP(+) = (6R)-5,10-methenyltetrahydrofolate + NADPH. It carries out the reaction (6R)-5,10-methenyltetrahydrofolate + H2O = (6R)-10-formyltetrahydrofolate + H(+). The protein operates within one-carbon metabolism; tetrahydrofolate interconversion. Its function is as follows. Catalyzes the oxidation of 5,10-methylenetetrahydrofolate to 5,10-methenyltetrahydrofolate and then the hydrolysis of 5,10-methenyltetrahydrofolate to 10-formyltetrahydrofolate. The protein is Bifunctional protein FolD of Rickettsia rickettsii (strain Iowa).